The following is a 239-amino-acid chain: Adapter protein MecA (239 aa).

The segment covering 118-128 (EQRTKEKEAQG) has biased composition (basic and acidic residues). Residues 118 to 137 (EQRTKEKEAQGSKRQKSSAR) are disordered.

It belongs to the MecA family. In terms of assembly, homodimer.

In terms of biological role, enables the recognition and targeting of unfolded and aggregated proteins to the ClpC protease or to other proteins involved in proteolysis. This Staphylococcus aureus (strain bovine RF122 / ET3-1) protein is Adapter protein MecA.